The chain runs to 257 residues: Indole-3-glycerol phosphate synthase (257 aa).

The protein belongs to the TrpC family.

The catalysed reaction is 1-(2-carboxyphenylamino)-1-deoxy-D-ribulose 5-phosphate + H(+) = (1S,2R)-1-C-(indol-3-yl)glycerol 3-phosphate + CO2 + H2O. The protein operates within amino-acid biosynthesis; L-tryptophan biosynthesis; L-tryptophan from chorismate: step 4/5. The protein is Indole-3-glycerol phosphate synthase of Chlorobium chlorochromatii (strain CaD3).